The following is a 419-amino-acid chain: MKQTITEKIFSDHVGAQVYAGEIVESKIDMVIGNDITTPISIRQFEKSGAAHLANPDGFAIVMDHYIPTKDIASANQAKISREFAYKHNLKNFFDEKDIGIEHALIPEKGLVVSGDVIIGADSHTCTHGALGAFSTGMGSTDIAYAMITGKNWFKVPKSIKVVLKGRLGEHIYGKDLILKLISMIGVDGALYKALEFCGDIQNIDMDSRFSMCNMAIEAGAKSGIIAADEITKQFFKDKNLRAEPKYFYSDEDAFYERTVEIDMSALEPMVAYPFLPSNGKTITQAVADELKIDQAFIGSCTNGRLSDLRIAAEILKGKKVAKKTRLIITPATQKIYKAAEHEGLIDIFIDAGAVVSNPTCGACLGGYMGILGANERCVSTTNRNFVGRMGDRTSEVYLANSAVVAASAITGKITDPRR.

Cysteine 301, cysteine 361, and cysteine 364 together coordinate [4Fe-4S] cluster.

It belongs to the aconitase/IPM isomerase family. LeuC type 2 subfamily. Heterodimer of LeuC and LeuD. The cofactor is [4Fe-4S] cluster.

It carries out the reaction (2R,3S)-3-isopropylmalate = (2S)-2-isopropylmalate. The protein operates within amino-acid biosynthesis; L-leucine biosynthesis; L-leucine from 3-methyl-2-oxobutanoate: step 2/4. Catalyzes the isomerization between 2-isopropylmalate and 3-isopropylmalate, via the formation of 2-isopropylmaleate. In Campylobacter hominis (strain ATCC BAA-381 / DSM 21671 / CCUG 45161 / LMG 19568 / NCTC 13146 / CH001A), this protein is 3-isopropylmalate dehydratase large subunit.